A 141-amino-acid polypeptide reads, in one-letter code: Hemoglobin subunit alpha-3 (141 aa).

One can recognise a Globin domain in the interval 1-141 (VLSPADKTNV…VSTVLTSKYR (141 aa)). H58 contributes to the O2 binding site. Position 87 (H87) interacts with heme b.

Belongs to the globin family. Heterotetramer of two alpha chains and two beta chains. Red blood cells.

Functionally, involved in oxygen transport from the lung to the various peripheral tissues. This is Hemoglobin subunit alpha-3 from Pan troglodytes (Chimpanzee).